The sequence spans 111 residues: Iron-sulfur cluster insertion protein ErpA (111 aa).

Residues Cys-39, Cys-103, and Cys-105 each coordinate iron-sulfur cluster.

Belongs to the HesB/IscA family. Homodimer. Requires iron-sulfur cluster as cofactor.

Required for insertion of 4Fe-4S clusters for at least IspG. This Acinetobacter baumannii (strain AB307-0294) protein is Iron-sulfur cluster insertion protein ErpA.